The primary structure comprises 88 residues: Small ribosomal subunit protein uS17 (88 aa).

The protein belongs to the universal ribosomal protein uS17 family. Part of the 30S ribosomal subunit.

In terms of biological role, one of the primary rRNA binding proteins, it binds specifically to the 5'-end of 16S ribosomal RNA. The polypeptide is Small ribosomal subunit protein uS17 (Leuconostoc mesenteroides subsp. mesenteroides (strain ATCC 8293 / DSM 20343 / BCRC 11652 / CCM 1803 / JCM 6124 / NCDO 523 / NBRC 100496 / NCIMB 8023 / NCTC 12954 / NRRL B-1118 / 37Y)).